The chain runs to 415 residues: DNA polymerase IV 2 (415 aa).

Positions 7–183 constitute a UmuC domain; the sequence is ILHADLDAFY…LPVSLMWGVG (177 aa). The Mg(2+) site is built by Asp11 and Asp101. Glu102 is an active-site residue.

This sequence belongs to the DNA polymerase type-Y family. In terms of assembly, monomer. Requires Mg(2+) as cofactor.

The protein resides in the cytoplasm. The catalysed reaction is DNA(n) + a 2'-deoxyribonucleoside 5'-triphosphate = DNA(n+1) + diphosphate. Functionally, poorly processive, error-prone DNA polymerase involved in untargeted mutagenesis. Copies undamaged DNA at stalled replication forks, which arise in vivo from mismatched or misaligned primer ends. These misaligned primers can be extended by PolIV. Exhibits no 3'-5' exonuclease (proofreading) activity. May be involved in translesional synthesis, in conjunction with the beta clamp from PolIII. This Mesorhizobium japonicum (strain LMG 29417 / CECT 9101 / MAFF 303099) (Mesorhizobium loti (strain MAFF 303099)) protein is DNA polymerase IV 2 (dinB2).